The chain runs to 132 residues: Group 2 truncated hemoglobin YjbI (132 aa).

Residues Thr45, Lys48, Tyr63, and His76 each coordinate heme.

This sequence belongs to the truncated hemoglobin family. Group II subfamily. In terms of assembly, monomer. Requires heme as cofactor.

In terms of biological role, hemoglobin-like protein that exhibits a low peroxidase activity. Its very high oxygen affinity may rule out the possibility that it is involved in oxygen transport. This is Group 2 truncated hemoglobin YjbI (yjbI) from Bacillus subtilis (strain 168).